Reading from the N-terminus, the 136-residue chain is Monothiol glutaredoxin-S3 (136 aa).

One can recognise a Glutaredoxin domain in the interval 18-135 (EREVRRAVEE…PVLKQAGALW (118 aa)). Residue Cys38 participates in [2Fe-2S] cluster binding. The Responsive for interaction with TGA factors signature appears at 133 to 136 (ALWL).

This sequence belongs to the glutaredoxin family. CC-type subfamily.

It localises to the cytoplasm. The protein resides in the nucleus. Its function is as follows. May only reduce GSH-thiol disulfides, but not protein disulfides. The polypeptide is Monothiol glutaredoxin-S3 (GRXS3) (Oryza sativa subsp. japonica (Rice)).